The chain runs to 159 residues: 6,7-dimethyl-8-ribityllumazine synthase (159 aa).

Residues Trp-27, 62–64, and 86–88 each bind 5-amino-6-(D-ribitylamino)uracil; these read SWE and VLI. Position 91-92 (91-92) interacts with (2S)-2-hydroxy-3-oxobutyl phosphate; that stretch reads ST. The Proton donor role is filled by His-94. Leu-119 contributes to the 5-amino-6-(D-ribitylamino)uracil binding site. Arg-133 lines the (2S)-2-hydroxy-3-oxobutyl phosphate pocket.

Homopentamer.

It catalyses the reaction (2S)-2-hydroxy-3-oxobutyl phosphate + 5-amino-6-(D-ribitylamino)uracil = 6,7-dimethyl-8-(1-D-ribityl)lumazine + phosphate + 2 H2O + H(+). It functions in the pathway cofactor biosynthesis; riboflavin biosynthesis; riboflavin from 2-hydroxy-3-oxobutyl phosphate and 5-amino-6-(D-ribitylamino)uracil: step 1/2. Competitively inhibited by riboflavin (Ki of 17 uM). In terms of biological role, catalyzes the formation of 6,7-dimethyl-8-ribityllumazine by condensation of 5-amino-6-(D-ribitylamino)uracil with 3,4-dihydroxy-2-butanone 4-phosphate. This is the penultimate step in the biosynthesis of riboflavin. Also binds riboflavin with an unexpected high affinity. The protein is 6,7-dimethyl-8-ribityllumazine synthase (rib4) of Schizosaccharomyces pombe (strain 972 / ATCC 24843) (Fission yeast).